A 1254-amino-acid chain; its full sequence is Histone-lysine N-methyltransferase eggless (1254 aa).

Disordered stretches follow at residues 24–209 (ALVE…EIPR) and 228–248 (PVPR…SKTT). Basic and acidic residues-rich tracts occupy residues 40 to 57 (TPEK…KDLT) and 65 to 81 (KSQE…KDPE). Low complexity predominate over residues 112–125 (SVELLESPLKSPSS). Residues 136 to 162 (LEEKEKPGPAKELEPKESEPDSKESSK) are compositionally biased toward basic and acidic residues. A compositionally biased stretch (polar residues) spans 172 to 181 (ELISSPTSDD). Composition is skewed to basic and acidic residues over residues 182 to 197 (SLAK…EHGQ) and 234 to 243 (AMQESKETQK). Residues 391–416 (TILQAKIERLAKKFEEVDLQLAQVQG) adopt a coiled-coil conformation. Tudor domains follow at residues 535–607 (RLPI…SEKV) and 634–691 (QCTK…KETQ). A disordered region spans residues 734–760 (ARKSTSKSGSPASTAAPPTGSSSSSAV). Positions 739–759 (SKSGSPASTAAPPTGSSSSSA) are enriched in low complexity. One can recognise an MBD domain in the interval 811–877 (LDSYSPLSKP…DNFDFTPDLR (67 aa)). The region spanning 939-1011 (VCCDCEDDCS…NCLNRVVQHS (73 aa)) is the Pre-SET domain. Residues Cys-941, Cys-943, Cys-947, Cys-953, Cys-955, Cys-993, Cys-997, Cys-999, and Cys-1003 each coordinate Zn(2+). The 216-residue stretch at 1014–1229 (MKLQVFKTSN…SGTELTWNYN (216 aa)) folds into the SET domain. Residues 1024–1026 (RGW), Asp-1062, and Tyr-1064 contribute to the S-adenosyl-L-methionine site. Residues 1081–1090 (YESDVERADL) show a composition bias toward basic and acidic residues. A disordered region spans residues 1081 to 1139 (YESDVERADLDHEDDNYGPDAEDDDDFRPNNYYQKKKEKLRSSRSNSSSTQNTELDSQE). Residues 1091–1106 (DHEDDNYGPDAEDDDD) show a composition bias toward acidic residues. A compositionally biased stretch (low complexity) spans 1123-1134 (SRSNSSSTQNTE). S-adenosyl-L-methionine-binding positions include Arg-1183 and 1186 to 1187 (NH). Zn(2+) contacts are provided by Cys-1189, Cys-1242, Cys-1244, and Cys-1249. In terms of domain architecture, Post-SET spans 1238–1254 (KVLYCQCGAQNCRVRLL).

The protein belongs to the class V-like SAM-binding methyltransferase superfamily. Histone-lysine methyltransferase family. Suvar3-9 subfamily.

It is found in the nucleus. It localises to the chromosome. It catalyses the reaction L-lysyl(9)-[histone H3] + 3 S-adenosyl-L-methionine = N(6),N(6),N(6)-trimethyl-L-lysyl(9)-[histone H3] + 3 S-adenosyl-L-homocysteine + 3 H(+). In terms of biological role, histone methyltransferase that specifically trimethylates 'Lys-9' of histone H3 in ovary. H3 'Lys-9' trimethylation represents a specific tag for epigenetic transcriptional repression by recruiting Su(var)205/HP1 to methylated histones. Plays a central role during oogenesis. The protein is Histone-lysine N-methyltransferase eggless (egg) of Drosophila pseudoobscura pseudoobscura (Fruit fly).